The chain runs to 726 residues: F-box protein COS111 (726 aa).

An F-box domain is found at 143 to 194 (FADINCLPEEIICRIIANLNDADSQRNCLLVSQEWSECAKRIIYKDVKFTST). The tract at residues 276 to 295 (RSRTRRSSDASSMNSSVFSH) is disordered. Over residues 284–295 (DASSMNSSVFSH) the composition is skewed to low complexity.

Functionally, F-box protein probably involved in ubiquitin conjugation pathway. This is F-box protein COS111 (COS111) from Kluyveromyces lactis (strain ATCC 8585 / CBS 2359 / DSM 70799 / NBRC 1267 / NRRL Y-1140 / WM37) (Yeast).